The following is a 143-amino-acid chain: Snake venom vascular endothelial growth factor toxin (143 aa).

Positions 1–24 are cleaved as a signal peptide; the sequence is MAAYLLAVAILFCIQGWPSATVQG. Residue glutamine 25 is modified to Pyrrolidone carboxylic acid. 3 cysteine pairs are disulfide-bonded: cysteine 38-cysteine 80, cysteine 69-cysteine 115, and cysteine 73-cysteine 117. The segment at 115-143 is disordered; the sequence is CECRPRSPGDVNNGRNPEEGEPRARFPFV. Basic and acidic residues predominate over residues 130–143; it reads NPEEGEPRARFPFV.

It belongs to the PDGF/VEGF growth factor family. Snake venom VEGF subfamily. Homodimer; disulfide-linked. Interacts with VEGF receptor-2 (KDR). The N-terminus is blocked for N-terminal sequencing, suggesting a Pyrrolidone carboxylic acid at Gln-25. In terms of tissue distribution, expressed by the venom gland.

The protein resides in the secreted. Functionally, snake venom VEGFs that may contribute to venom dispersion and prey subjugation by inducing vascular permeability and hypotension. This protein induces an increase in capillary permeability when intradermally injected into mice. Also provokes a drastic hypotensive effect after intravenous injection. The hypotension is mediated by nitric oxide (NO), which is produced by VEGF-activated endothelium NO synthase. Also induces angiogenesis in vitro. Unlike other crotalid VEGFs, this protein interacts with VEGF receptor-2 (KDR) with a high affinity (Kd=413 pM), whereas no interaction is detected with VEGF receptor-1 (FLT1). The protein is Snake venom vascular endothelial growth factor toxin of Protobothrops jerdonii (Jerdon's pitviper).